The chain runs to 352 residues: Holliday junction branch migration complex subunit RuvB (352 aa).

Residues 4–185 (PDRLISAVSG…FGIVQRLEFY (182 aa)) are large ATPase domain (RuvB-L). ATP-binding positions include isoleucine 24, arginine 25, glycine 66, lysine 69, threonine 70, threonine 71, 132-134 (EDF), arginine 175, tyrosine 185, and arginine 222. Threonine 70 contacts Mg(2+). A small ATPAse domain (RuvB-S) region spans residues 186–256 (NVEDLATIVS…IADKALNLLD (71 aa)). Residues 259–352 (ERGFDHLDRR…TDLFTSEDGN (94 aa)) are head domain (RuvB-H). DNA contacts are provided by arginine 295, arginine 314, and arginine 319.

Belongs to the RuvB family. In terms of assembly, homohexamer. Forms an RuvA(8)-RuvB(12)-Holliday junction (HJ) complex. HJ DNA is sandwiched between 2 RuvA tetramers; dsDNA enters through RuvA and exits via RuvB. An RuvB hexamer assembles on each DNA strand where it exits the tetramer. Each RuvB hexamer is contacted by two RuvA subunits (via domain III) on 2 adjacent RuvB subunits; this complex drives branch migration. In the full resolvosome a probable DNA-RuvA(4)-RuvB(12)-RuvC(2) complex forms which resolves the HJ.

The protein localises to the cytoplasm. The enzyme catalyses ATP + H2O = ADP + phosphate + H(+). The RuvA-RuvB-RuvC complex processes Holliday junction (HJ) DNA during genetic recombination and DNA repair, while the RuvA-RuvB complex plays an important role in the rescue of blocked DNA replication forks via replication fork reversal (RFR). RuvA specifically binds to HJ cruciform DNA, conferring on it an open structure. The RuvB hexamer acts as an ATP-dependent pump, pulling dsDNA into and through the RuvAB complex. RuvB forms 2 homohexamers on either side of HJ DNA bound by 1 or 2 RuvA tetramers; 4 subunits per hexamer contact DNA at a time. Coordinated motions by a converter formed by DNA-disengaged RuvB subunits stimulates ATP hydrolysis and nucleotide exchange. Immobilization of the converter enables RuvB to convert the ATP-contained energy into a lever motion, pulling 2 nucleotides of DNA out of the RuvA tetramer per ATP hydrolyzed, thus driving DNA branch migration. The RuvB motors rotate together with the DNA substrate, which together with the progressing nucleotide cycle form the mechanistic basis for DNA recombination by continuous HJ branch migration. Branch migration allows RuvC to scan DNA until it finds its consensus sequence, where it cleaves and resolves cruciform DNA. This Pseudomonas aeruginosa (strain LESB58) protein is Holliday junction branch migration complex subunit RuvB.